Here is a 526-residue protein sequence, read N- to C-terminus: Carotenoid cleavage oxygenase 1 (526 aa).

The disordered stretch occupies residues 1–33 (MAEYVFSDAPKDSHGNGVKDAVPGKQPEELPPA). Piceatannol-binding residues include Tyr-133 and Lys-164. Residues Tyr-133 and Lys-164 each contribute to the trans-resveratrol site. Residues His-197, His-248, and His-313 each contribute to the Fe cation site. Glu-383 contributes to the piceatannol binding site. Position 383 (Glu-383) interacts with trans-resveratrol. His-510 is a Fe cation binding site.

This sequence belongs to the carotenoid oxygenase family. Requires Fe(2+) as cofactor.

It catalyses the reaction trans-resveratrol + O2 = 3,5-dihydroxybenzaldehyde + 4-hydroxybenzaldehyde. It carries out the reaction piceatannol + O2 = 3,5-dihydroxybenzaldehyde + 3,4-dihydroxybenzaldehyde. In terms of biological role, dioxygenase that cleaves the interphenyl C-alpha-C-beta double bond of resveratrol to yield 3,5-dihydroxybenzaldehyde and 4-hydroxybenzaldehyde. Also cleaves piceatannol, a compound that differs from resveratrol only in the occurrence of an additional hydroxyl group, which leads to the production of 3,4-dihydroxybenzaldehyde and 3,5-hydroxybenzaldehyde. Is not able to cleave trans-stilbene, 4-monohydroxy-trans-stilbene, 3,5-dihydroxy-trans-stilbene (pinosylvin), trismethoxy-resveratrol, and 3,3',5-trihydroxy-4'-methoxystilbene-3-O-beta-D-glucoside. Is not involved in carotenoid metabolism. The protein is Carotenoid cleavage oxygenase 1 of Neurospora crassa (strain ATCC 24698 / 74-OR23-1A / CBS 708.71 / DSM 1257 / FGSC 987).